Reading from the N-terminus, the 375-residue chain is Putative glutamate--cysteine ligase 2 (375 aa).

The protein belongs to the glutamate--cysteine ligase type 2 family. YbdK subfamily.

It carries out the reaction L-cysteine + L-glutamate + ATP = gamma-L-glutamyl-L-cysteine + ADP + phosphate + H(+). Its function is as follows. ATP-dependent carboxylate-amine ligase which exhibits weak glutamate--cysteine ligase activity. The chain is Putative glutamate--cysteine ligase 2 from Sorangium cellulosum (strain So ce56) (Polyangium cellulosum (strain So ce56)).